Consider the following 702-residue polypeptide: Neurochondrin (702 aa).

This sequence belongs to the neurochondrin family.

The protein resides in the cytoplasm. It localises to the cytosol. Its subcellular location is the cell projection. The protein localises to the dendrite. It is found in the postsynapse. Its function is as follows. Probably involved in signal transduction, in the nervous system. Required for the spatial learning process. May also be involved in neurite outgrowth. The polypeptide is Neurochondrin (NCDN) (Gallus gallus (Chicken)).